Here is a 208-residue protein sequence, read N- to C-terminus: Putative dioxygenase RC0543 (208 aa).

Belongs to the intradiol ring-cleavage dioxygenase family.

This chain is Putative dioxygenase RC0543, found in Rickettsia conorii (strain ATCC VR-613 / Malish 7).